Here is a 650-residue protein sequence, read N- to C-terminus: Threonine--tRNA ligase (650 aa).

Positions 3-65 constitute a TGS domain; it reads DLVKVTLPDG…ERDARLEIVT (63 aa). The segment at 248–548 is catalytic; that stretch reads DHRRLGPQLG…LVEHYAGAFP (301 aa). Zn(2+) is bound by residues C349, H400, and H525.

The protein belongs to the class-II aminoacyl-tRNA synthetase family. Homodimer. Requires Zn(2+) as cofactor.

It localises to the cytoplasm. The catalysed reaction is tRNA(Thr) + L-threonine + ATP = L-threonyl-tRNA(Thr) + AMP + diphosphate + H(+). In terms of biological role, catalyzes the attachment of threonine to tRNA(Thr) in a two-step reaction: L-threonine is first activated by ATP to form Thr-AMP and then transferred to the acceptor end of tRNA(Thr). Also edits incorrectly charged L-seryl-tRNA(Thr). In Anaeromyxobacter dehalogenans (strain 2CP-1 / ATCC BAA-258), this protein is Threonine--tRNA ligase.